The primary structure comprises 59 residues: uncharacterized protein (59 aa).

This is an uncharacterized protein from Saccharomyces cerevisiae (strain ATCC 204508 / S288c) (Baker's yeast).